Here is a 232-residue protein sequence, read N- to C-terminus: Ubiquinone biosynthesis O-methyltransferase (232 aa).

S-adenosyl-L-methionine-binding residues include Arg-36, Gly-55, Asp-76, and Met-120.

It belongs to the methyltransferase superfamily. UbiG/COQ3 family.

The enzyme catalyses a 3-demethylubiquinol + S-adenosyl-L-methionine = a ubiquinol + S-adenosyl-L-homocysteine + H(+). It carries out the reaction a 3-(all-trans-polyprenyl)benzene-1,2-diol + S-adenosyl-L-methionine = a 2-methoxy-6-(all-trans-polyprenyl)phenol + S-adenosyl-L-homocysteine + H(+). It functions in the pathway cofactor biosynthesis; ubiquinone biosynthesis. In terms of biological role, O-methyltransferase that catalyzes the 2 O-methylation steps in the ubiquinone biosynthetic pathway. The polypeptide is Ubiquinone biosynthesis O-methyltransferase (Burkholderia multivorans (strain ATCC 17616 / 249)).